A 188-amino-acid polypeptide reads, in one-letter code: Mitochondrial import inner membrane translocase subunit Tim23B (188 aa).

A run of 2 helical transmembrane segments spans residues 73-93 (FELAFFTIGGCCMTGAAFGAM) and 125-145 (ALWANTLGSLALLYSAFGVII).

It belongs to the Tim17/Tim22/Tim23 family.

It is found in the mitochondrion inner membrane. Functionally, may participate in the translocation of transit peptide-containing proteins across the mitochondrial inner membrane. the PAM complex. The sequence is that of Mitochondrial import inner membrane translocase subunit Tim23B from Homo sapiens (Human).